A 1051-amino-acid polypeptide reads, in one-letter code: Ubiquitin carboxyl-terminal hydrolase 28 (1051 aa).

The disordered stretch occupies residues 60–82 (DQRVKEPSHDTTAAEPSEVEESA). Residue S67 is modified to Phosphoserine. The UIM domain maps to 97 to 116 (DNKDDLQAAIALSLLESPNI). K99 participates in a covalent cross-link: Glycyl lysine isopeptide (Lys-Gly) (interchain with G-Cter in SUMO2). Positions 121–135 (RDLNRAHEANSAETK) are enriched in basic and acidic residues. The segment at 121–140 (RDLNRAHEANSAETKRSKRK) is disordered. Residues 162 to 655 (VGLKNVGNTC…SAYCLMYIND (494 aa)) enclose the USP domain. C171 functions as the Nucleophile in the catalytic mechanism. Phosphoserine is present on S376. The interval 483 to 538 (DLTPKESSSPESCSQNAGSTFSSPEDALPSSEGMNGPFTSPHSSLETPAPPAPRTV) is disordered. Polar residues-rich tracts occupy residues 487-505 (KESSSPESCSQNAGSTFSS) and 519-528 (PFTSPHSSLE). At S555 the chain carries Phosphoserine. H605 (proton acceptor) is an active-site residue. The disordered stretch occupies residues 703–735 (EEQSCKIPQMESSPNSSSQDFSTSQESPAVSSH). Residues 713 to 730 (ESSPNSSSQDFSTSQESP) show a composition bias toward low complexity. Phosphoserine is present on S720. T1022 bears the Phosphothreonine mark.

The protein belongs to the peptidase C19 family. USP28 subfamily. Interacts with ZNF304. Interacts with PRKD1. Interacts with TP53BP1. Interacts with FBXW7; following DNA damage, dissociates from FBXW7 leading to degradation of MYC. Post-translationally, degraded upon nickel ion level or hypoxia exposure. In terms of processing, phosphorylated upon DNA damage at Ser-67 and Ser-720, by ATM or ATR. Phosphorylated by PRKD1.

Its subcellular location is the nucleus. It is found in the nucleoplasm. It catalyses the reaction Thiol-dependent hydrolysis of ester, thioester, amide, peptide and isopeptide bonds formed by the C-terminal Gly of ubiquitin (a 76-residue protein attached to proteins as an intracellular targeting signal).. In terms of biological role, deubiquitinase involved in DNA damage response checkpoint and MYC proto-oncogene stability. Involved in DNA damage induced apoptosis by specifically deubiquitinating proteins of the DNA damage pathway such as CLSPN. Also involved in G2 DNA damage checkpoint, by deubiquitinating CLSPN, and preventing its degradation by the anaphase promoting complex/cyclosome (APC/C). In contrast, it does not deubiquitinate PLK1. Specifically deubiquitinates MYC in the nucleoplasm, leading to prevent MYC degradation by the proteasome: acts by specifically interacting with FBXW7 (FBW7alpha) in the nucleoplasm and counteracting ubiquitination of MYC by the SCF(FBXW7) complex. Deubiquitinates ZNF304, hence preventing ZNF304 degradation by the proteasome and leading to the activated KRAS-mediated promoter hypermethylation and transcriptional silencing of tumor suppressor genes (TSGs) in a subset of colorectal cancers (CRC) cells. The sequence is that of Ubiquitin carboxyl-terminal hydrolase 28 (Usp28) from Mus musculus (Mouse).